A 394-amino-acid chain; its full sequence is MSKEKFERTKPHVNVGTIGHVDHGKTTLTAAICTVLAKVYGGKARDFASIDNAPEERERGITINTSHVEYDTPNRHYAHVDCPGHADYVKNMITGAAQMDGGILVVAATDGPMPQTREHILLGRQVGIPYIIVFMNKCDMVDDEELLELVEMEVRELLSEYDFPGDDLPVIQGSALGALNGEAQWEAKIVELAEALDTYIPEPERAVDMAFLMPIEDVFSIQGRGTVVTGRIERGILKVGDEVAIVGIKETVKTTCTGVEMFRKLLDEGRAGENVGALLRGTKREEVERGQVLAKPGSITPHTKFESEVYVLSKDEGGRHTPFFKGYRPQFYFRTTDVTGSIELPEGVEMVMPGDNVKMVVDLIAPIAMDEGLRFAIREGGRTVGAGVVAKIIA.

Residues K10–E204 enclose the tr-type G domain. The tract at residues G19–T26 is G1. G19 to T26 lines the GTP pocket. T26 is a Mg(2+) binding site. The G2 stretch occupies residues G60–N64. The G3 stretch occupies residues D81–G84. Residues D81 to H85 and N136 to D139 each bind GTP. Positions N136–D139 are G4. The segment at S174–L176 is G5.

It belongs to the TRAFAC class translation factor GTPase superfamily. Classic translation factor GTPase family. EF-Tu/EF-1A subfamily. As to quaternary structure, monomer.

The protein localises to the cytoplasm. The enzyme catalyses GTP + H2O = GDP + phosphate + H(+). In terms of biological role, GTP hydrolase that promotes the GTP-dependent binding of aminoacyl-tRNA to the A-site of ribosomes during protein biosynthesis. In Vibrio cholerae serotype O1 (strain ATCC 39541 / Classical Ogawa 395 / O395), this protein is Elongation factor Tu.